Here is a 142-residue protein sequence, read N- to C-terminus: uncharacterized protein (142 aa).

This is an uncharacterized protein from Mycobacterium tuberculosis (strain CDC 1551 / Oshkosh).